Here is a 339-residue protein sequence, read N- to C-terminus: MAELEFTDEKFTKVDPELKEILKKHPAGTENITNIWQMRAMDEECRKQLAETILPLPDDVSVTDILIPTRDGTEIDGRVFTPVSVPADYRSLMVFYHSSGWCMRGVRDDDSLFKILTPKFGCVCVSVDYRLAPESKFPVAHNDAIDSFKWVASNIEKLGANPKRGFFLGGASAGGNFVSVLSHIARDEKIKPELTGLWHMVPTLIHPADLDEETMAQFRSYKETIHAPVITPKIMDIFFENYQPTPKSPLVNPLYYPTGHKDLPPSFFQCCGWDPLRDEGIAYEKALKAAGNETRLIVYEGVPHCFWVYYPMLSLRKKYFEDAIDGFTWLLSHVKKEDD.

The protein belongs to the AB hydrolase superfamily.

This chain is AB hydrolase superfamily protein B1A11.02, found in Schizosaccharomyces pombe (strain 972 / ATCC 24843) (Fission yeast).